Consider the following 146-residue polypeptide: L-fucose mutarotase (146 aa).

Histidine 22 functions as the Proton donor in the catalytic mechanism. Residues aspartate 30, arginine 109, and 131 to 133 (YGN) each bind substrate.

The protein belongs to the RbsD / FucU family. FucU mutarotase subfamily. As to quaternary structure, homodecamer.

It is found in the cytoplasm. The enzyme catalyses alpha-L-fucose = beta-L-fucose. The protein operates within carbohydrate metabolism; L-fucose metabolism. In terms of biological role, involved in the anomeric conversion of L-fucose. The polypeptide is L-fucose mutarotase (Glaesserella parasuis serovar 5 (strain SH0165) (Haemophilus parasuis)).